A 281-amino-acid polypeptide reads, in one-letter code: CLA biosynthesis isomerase (281 aa).

The protein belongs to the ADC family.

It is found in the cytoplasm. It carries out the reaction 10-oxo-(12Z)-octadecenoate = 10-oxo-(11E)-octadecenoate. The protein operates within lipid metabolism; fatty acid metabolism. Functionally, is involved in a saturation metabolic pathway of polyunsaturated fatty acids, that detoxifies unsaturated fatty acids and generates hydroxy fatty acids, oxo fatty acids, conjugated fatty acids such as conjugated linoleic acids (CLAs), and partially saturated trans-fatty acids as intermediates. CLA-DC catalyzes the migration of the carbon-carbon double bond in 10-oxo-(12Z)-octadecenoate to produce 10-oxo-(11E)-octadecenoate, during linoleate metabolism. As part of the gut microbiome, this enzyme modifies host fatty acid composition and is expected to improve human health by altering lipid metabolism related to the onset of metabolic syndrome. This Lactiplantibacillus plantarum (Lactobacillus plantarum) protein is CLA biosynthesis isomerase.